Reading from the N-terminus, the 421-residue chain is Divalent metal cation transporter MntH (421 aa).

11 helical membrane passes run 27–47 (LGPAFIVSVAYVDPGNFATNI), 51–71 (SLFDYHLIWVILWSNVIAIFL), 100–120 (WFLWITAELAAMATDLAEFLG), 128–148 (LFHIPMTYAAFLTGVVTFAIV), 160–180 (GIIFGLVAVISLAYAFELFIA), 201–221 (AMLIAVGILGATVMPHVIYLH), 248–268 (ILVAMNTAFIINAAMLIVSAA), 289–309 (PLLGVFSSWAFGIALLASGFS), 337–357 (LVTMVPAITIIALGIDPLKSL), 358–378 (IVSQVVLSFELPMAIIPLLLI), and 396–416 (IMGVLVASFVMILNGLLLYLT).

This sequence belongs to the NRAMP family.

It localises to the cell membrane. Functionally, h(+)-stimulated, divalent metal cation uptake system. This Caldanaerobacter subterraneus subsp. tengcongensis (strain DSM 15242 / JCM 11007 / NBRC 100824 / MB4) (Thermoanaerobacter tengcongensis) protein is Divalent metal cation transporter MntH.